The chain runs to 1024 residues: Nardilysin-like (1024 aa).

Residues 41–103 (PDIYPEGSVP…DEVKGKGDHQ (63 aa)) are disordered. Positions 52-95 (QIDEDDEDGEEEDSDGSSEDDDDDEDDEEDGEGDEEDEDEDEDE) are enriched in acidic residues. A Zn(2+)-binding site is contributed by H129. Catalysis depends on E132, which acts as the Proton acceptor. H133 contributes to the Zn(2+) binding site. Residue E203 is part of the active site. E210 contributes to the Zn(2+) binding site.

This sequence belongs to the peptidase M16 family. It depends on Zn(2+) as a cofactor.

The enzyme catalyses Hydrolysis of polypeptides, preferably at -Xaa-|-Arg-Lys-, and less commonly at -Arg-|-Arg-Xaa-, in which Xaa is not Arg or Lys.. In terms of biological role, cleaves peptide substrates on the N-terminus of arginine residues in dibasic pairs. This Arabidopsis thaliana (Mouse-ear cress) protein is Nardilysin-like.